The primary structure comprises 586 residues: Membrane protein insertase YidC (586 aa).

Transmembrane regions (helical) follow at residues 5–25 (TLIGLVLIALIMMAWFQLMAP), 371–391 (GVIIILFALFIKLVTYPLTMA), 436–456 (LGGCLPTVIQMPLLFAMFYVF), 486–506 (IPLYGDHVSVIPILMGVAVFF), and 522–542 (FMMYLFPGMMLIFFNNMPSGL).

Belongs to the OXA1/ALB3/YidC family. Type 1 subfamily. As to quaternary structure, interacts with the Sec translocase complex via SecD. Specifically interacts with transmembrane segments of nascent integral membrane proteins during membrane integration.

The protein localises to the cell inner membrane. In terms of biological role, required for the insertion and/or proper folding and/or complex formation of integral membrane proteins into the membrane. Involved in integration of membrane proteins that insert both dependently and independently of the Sec translocase complex, as well as at least some lipoproteins. Aids folding of multispanning membrane proteins. This Chloroherpeton thalassium (strain ATCC 35110 / GB-78) protein is Membrane protein insertase YidC.